We begin with the raw amino-acid sequence, 429 residues long: Proton extrusion protein PxcA (429 aa).

The interval 139–161 is disordered; the sequence is LNGPEAPQTNGDRPDNKPKVETV. Positions 150-161 are enriched in basic and acidic residues; that stretch reads DRPDNKPKVETV. The next 4 helical transmembrane spans lie at 211–231, 306–326, 353–373, and 389–409; these read FLLTLVIVPLLVHQLAKIAIT, AYENIFSDIFSFFAFVGILLI, LIILFTDIFVGYHSPHGWEII, and FNFLFIATFPVILDTVLKYWI.

The protein belongs to the CemA family.

The protein localises to the cell inner membrane. Its function is as follows. Required for H(+) efflux immediately after light irradiation to form a rapid H(+) concentration gradient across the thylakoid membranes. Together with PxcL, contributes to transient H(+) uptake following dark to light transition. The chain is Proton extrusion protein PxcA from Picosynechococcus sp. (strain ATCC 27264 / PCC 7002 / PR-6) (Agmenellum quadruplicatum).